The primary structure comprises 295 residues: ATP synthase gamma chain (295 aa).

Belongs to the ATPase gamma chain family. In terms of assembly, F-type ATPases have 2 components, CF(1) - the catalytic core - and CF(0) - the membrane proton channel. CF(1) has five subunits: alpha(3), beta(3), gamma(1), delta(1), epsilon(1). CF(0) has three main subunits: a, b and c.

It is found in the cell membrane. Its function is as follows. Produces ATP from ADP in the presence of a proton gradient across the membrane. The gamma chain is believed to be important in regulating ATPase activity and the flow of protons through the CF(0) complex. The protein is ATP synthase gamma chain of Desulforudis audaxviator (strain MP104C).